The chain runs to 75 residues: NECIRKWLSCVDRKNDCCEGLECYKRRHSFEVCVPIPGFCLVKWKQCDGRERDCCPGLECWKRSGNKSSVCAPIT.

Cystine bridges form between C3/C18, C10/C23, C17/C33, C40/C55, C47/C60, and C54/C71. 2 Domain repeats span residues 3–33 and 40–71; these read CIRKWLSCVDRKNDCCEGLECYKRRHSFEVC and CLVKWKQCDGRERDCCPGLECWKRSGNKSSVC. The tract at residues 3 to 71 is 2 X approximate repeats with cysteine pattern C-C-CC-C-C; sequence CIRKWLSCVD…KRSGNKSSVC (69 aa).

It belongs to the psalmotoxin-1 family. Double-knot toxin subfamily. Expressed by the venom gland.

The protein resides in the secreted. This toxin potently and selectively inhibits ASIC1a, an isoform of the gene ASIC1. It incompletely inhibits ASIC1a activation in a pH-independent and slowly reversible manner. This toxin acts by binding to and stabilizing the closed state of the channel, thereby impeding the transition into a conducting state. This toxin may bind to the acidic pocket of ASIC1a, since mutation of a key residue of this pocket (Arg-350) abolishes the ability of the toxin to inhibit ASIC1a. In vivo, this toxin protects the brain from neuronal injury when administered up to 8 hours after stroke onset. This chain is Pi-hexatoxin-Hi1b, found in Hadronyche infensa (Fraser island funnel-web spider).